The chain runs to 600 residues: Tripeptidyl-peptidase 1 (600 aa).

The signal sequence occupies residues 1-22 (MNIKFNLIIIILFILFISNVNC). A propeptide spans 23–220 (KKIKNKKHLT…GGGGKVNGIG (198 aa)) (removed in mature form). N-linked (GlcNAc...) asparagine glycans are attached at residues asparagine 91, asparagine 259, and asparagine 266. Residues 248 to 600 (YLSPDLIRKE…FDELVKYCLE (353 aa)) form the Peptidase S53 domain. Catalysis depends on charge relay system residues glutamate 318 and aspartate 322. Cysteine 411 and cysteine 570 are disulfide-bonded. Asparagine 475 and asparagine 483 each carry an N-linked (GlcNAc...) asparagine glycan. The active-site Charge relay system is the serine 514. Residues aspartate 559, isoleucine 560, glycine 579, and aspartate 581 each coordinate Ca(2+).

As to quaternary structure, monomer. It depends on Ca(2+) as a cofactor. In terms of processing, activated by autocatalytic proteolytical processing upon acidification. N-glycosylation is required for processing and activity.

It is found in the secreted. It carries out the reaction Release of an N-terminal tripeptide from a polypeptide, but also has endopeptidase activity.. Functionally, serine protease with tripeptidyl-peptidase I activity. This is Tripeptidyl-peptidase 1 (tpp1) from Dictyostelium discoideum (Social amoeba).